The sequence spans 297 residues: MKNKSSRTRVAILGSGSIGLDLMFKVKASEHFDLKFVVGRHANSDGLKLARSCNVETSSDGLDFLKENEDAYDLVFDATSAAAHKVNNGFFSGAGKFVIDLTPAKLGRLCVPCINLDDIGAEQNVNLITCGGQASLPLAYALKQAVDEIEYLEVVSAIASRSAGIATRENIDEYMTTTEYALAQFSGAKKTKAILNINPAEPGVRMQTTLYAHARYRDFDRVRACVAEMVEKVREYVPGYRLVVEPIESQGRITISLTVRGRGDYLPEYAGNLDIINCAALAVASHRHATARLGATQ.

Serine 15–isoleucine 18 serves as a coordination point for NAD(+). Cysteine 130 serves as the catalytic Acyl-thioester intermediate. Residues serine 162–asparagine 170 and asparagine 272 each bind NAD(+).

It belongs to the acetaldehyde dehydrogenase family.

It carries out the reaction acetaldehyde + NAD(+) + CoA = acetyl-CoA + NADH + H(+). The chain is Acetaldehyde dehydrogenase (mhpF) from Burkholderia thailandensis (strain ATCC 700388 / DSM 13276 / CCUG 48851 / CIP 106301 / E264).